The primary structure comprises 170 residues: Mitochondrial fission 1 protein A (170 aa).

Residues 90–123 (REKLYLLAVGYYRSGNYSRSRQLVDRCIEMQADW) form a TPR repeat. A helical transmembrane segment spans residues 142 to 162 (VIGIGITATAFGAVGLIAGGI).

This sequence belongs to the FIS1 family. Interacts with ARC5.

The protein localises to the mitochondrion outer membrane. It is found in the peroxisome membrane. Functionally, component of the peroxisomal and mitochondrial division machineries. Plays a role in promoting the fission of mitochondria and peroxisomes. In Arabidopsis thaliana (Mouse-ear cress), this protein is Mitochondrial fission 1 protein A (FIS1A).